We begin with the raw amino-acid sequence, 117 residues long: Ribonuclease P protein component (117 aa).

This sequence belongs to the RnpA family. As to quaternary structure, consists of a catalytic RNA component (M1 or rnpB) and a protein subunit.

It carries out the reaction Endonucleolytic cleavage of RNA, removing 5'-extranucleotides from tRNA precursor.. RNaseP catalyzes the removal of the 5'-leader sequence from pre-tRNA to produce the mature 5'-terminus. It can also cleave other RNA substrates such as 4.5S RNA. The protein component plays an auxiliary but essential role in vivo by binding to the 5'-leader sequence and broadening the substrate specificity of the ribozyme. The sequence is that of Ribonuclease P protein component from Staphylococcus aureus (strain bovine RF122 / ET3-1).